The sequence spans 721 residues: Phosphomethylpyrimidine synthase (721 aa).

Substrate is bound by residues Asn-256, Met-285, Tyr-314, His-350, Ser-370–Gly-372, Asp-411–Arg-414, and Glu-450. Position 454 (His-454) interacts with Zn(2+). Tyr-477 is a binding site for substrate. His-518 is a Zn(2+) binding site. The [4Fe-4S] cluster site is built by Cys-598, Cys-601, and Cys-606.

It belongs to the ThiC family. Homodimer. It depends on [4Fe-4S] cluster as a cofactor.

The enzyme catalyses 5-amino-1-(5-phospho-beta-D-ribosyl)imidazole + S-adenosyl-L-methionine = 4-amino-2-methyl-5-(phosphooxymethyl)pyrimidine + CO + 5'-deoxyadenosine + formate + L-methionine + 3 H(+). It functions in the pathway cofactor biosynthesis; thiamine diphosphate biosynthesis. Catalyzes the synthesis of the hydroxymethylpyrimidine phosphate (HMP-P) moiety of thiamine from aminoimidazole ribotide (AIR) in a radical S-adenosyl-L-methionine (SAM)-dependent reaction. The polypeptide is Phosphomethylpyrimidine synthase (Shewanella oneidensis (strain ATCC 700550 / JCM 31522 / CIP 106686 / LMG 19005 / NCIMB 14063 / MR-1)).